Consider the following 418-residue polypeptide: Cyclin-dependent kinase 15 (418 aa).

In terms of domain architecture, Protein kinase spans 84 to 369 (YLNLEKLGEG…AQDALLHPYF (286 aa)). ATP is bound by residues 90–98 (LGEGTYATV) and Lys-113. Catalysis depends on Asp-205, which acts as the Proton acceptor.

It belongs to the protein kinase superfamily. CMGC Ser/Thr protein kinase family. CDC2/CDKX subfamily. The cofactor is Mg(2+).

It carries out the reaction L-seryl-[protein] + ATP = O-phospho-L-seryl-[protein] + ADP + H(+). It catalyses the reaction L-threonyl-[protein] + ATP = O-phospho-L-threonyl-[protein] + ADP + H(+). Serine/threonine-protein kinase involved in the control of the eukaryotic cell cycle, whose activity is controlled by an associated cyclin. This Danio rerio (Zebrafish) protein is Cyclin-dependent kinase 15 (cdk15).